We begin with the raw amino-acid sequence, 292 residues long: Geranyl diphosphate 2-C-methyltransferase (292 aa).

It belongs to the geranyl diphosphate 2-C-methyltransferase family. Requires Mg(2+) as cofactor.

It catalyses the reaction (2E)-geranyl diphosphate + S-adenosyl-L-methionine = (E)-2-methylgeranyl diphosphate + S-adenosyl-L-homocysteine + H(+). Catalyzes the SAM-dependent methylation of geranyl diphosphate (GPP) to yield (E)-2-methylgeranyl diphosphate (2-MeGPP). This is Geranyl diphosphate 2-C-methyltransferase from Streptomyces coelicolor (strain ATCC BAA-471 / A3(2) / M145).